We begin with the raw amino-acid sequence, 507 residues long: ATP synthase subunit alpha, mitochondrial (507 aa).

171 to 178 (GDRQTGKT) serves as a coordination point for ATP.

This sequence belongs to the ATPase alpha/beta chains family. F-type ATPases have 2 components, CF(1) - the catalytic core - and CF(0) - the membrane proton channel. CF(1) has five subunits: alpha(3), beta(3), gamma(1), delta(1), epsilon(1). CF(0) has three main subunits: a, b and c.

The protein resides in the mitochondrion. It localises to the mitochondrion inner membrane. Functionally, mitochondrial membrane ATP synthase (F(1)F(0) ATP synthase or Complex V) produces ATP from ADP in the presence of a proton gradient across the membrane which is generated by electron transport complexes of the respiratory chain. F-type ATPases consist of two structural domains, F(1) - containing the extramembraneous catalytic core, and F(0) - containing the membrane proton channel, linked together by a central stalk and a peripheral stalk. During catalysis, ATP synthesis in the catalytic domain of F(1) is coupled via a rotary mechanism of the central stalk subunits to proton translocation. Subunits alpha and beta form the catalytic core in F(1). Rotation of the central stalk against the surrounding alpha(3)beta(3) subunits leads to hydrolysis of ATP in three separate catalytic sites on the beta subunits. Subunit alpha does not bear the catalytic high-affinity ATP-binding sites. The sequence is that of ATP synthase subunit alpha, mitochondrial (ATPA) from Raphanus sativus (Radish).